Consider the following 191-residue polypeptide: Transposon Tn1546 resolvase (191 aa).

The Resolvase/invertase-type recombinase catalytic domain maps to 2–138; that stretch reads RKIGYIRVSS…EGIELAKKEG (137 aa). Catalysis depends on Ser-10, which acts as the O-(5'-phospho-DNA)-serine intermediate. The segment at residues 168-187 is a DNA-binding region (H-T-H motif); the sequence is VNQICEITNVSRASLYRKLS.

The protein belongs to the site-specific recombinase resolvase family.

Its function is as follows. Resolvase catalyzes the resolution (a site-specific recombination) of the cointegrated replicon to yield the final transposition products. The protein is Transposon Tn1546 resolvase of Enterococcus faecium (Streptococcus faecium).